The sequence spans 565 residues: Tetratricopeptide repeat protein 39A (565 aa).

3 TPR repeats span residues 271–304, 461–494, and 502–535; these read AIFL…QQVW, CLIQ…EKKL, and PNAL…YKVY.

The protein belongs to the TTC39 family.

This chain is Tetratricopeptide repeat protein 39A (ttc39a), found in Danio rerio (Zebrafish).